Consider the following 193-residue polypeptide: UPF0215 protein PH0071 (193 aa).

It belongs to the UPF0215 family.

This chain is UPF0215 protein PH0071, found in Pyrococcus horikoshii (strain ATCC 700860 / DSM 12428 / JCM 9974 / NBRC 100139 / OT-3).